Consider the following 166-residue polypeptide: MRLILLSGLLLLGIFLANGHEQDPDGKVLNSLIDALMDLQREFAKLRGAFLTVYKARSFGNGSERMYVTNKEIKNFEALRQICEQAEGHIPSPQLENQNKAFANVLERHGKEAYLVVGDSANFTNWAAGEPNKAAGACVKADTHGSWHSTSCDDNLLVVCEFYFIL.

Residues 1-19 (MRLILLSGLLLLGIFLANG) form the signal peptide. The C-type lectin domain occupies 46–161 (LRGAFLTVYK…CDDNLLVVCE (116 aa)). N-linked (GlcNAc...) asparagine glycans are attached at residues Asn61 and Asn122. 2 disulfides stabilise this stretch: Cys83/Cys160 and Cys138/Cys152.

It belongs to the alpha-type phospholipase A2 inhibitor family. In terms of assembly, homotrimer; non-covalently linked. Expressed by the liver.

The protein localises to the secreted. Functionally, this phospholipase A2 inhibitor binds directly phospholipase A2 in the presence or absence of calcium. The protein is Phospholipase A2 inhibitor clone 06/08 of Bothrops neuwiedi (Neuwied's lancehead).